The chain runs to 378 residues: Spermidine/putrescine import ATP-binding protein PotA (378 aa).

In terms of domain architecture, ABC transporter spans Val-18–Ile-248. Residue Gly-50–Thr-57 coordinates ATP.

Belongs to the ABC transporter superfamily. Spermidine/putrescine importer (TC 3.A.1.11.1) family. As to quaternary structure, the complex is composed of two ATP-binding proteins (PotA), two transmembrane proteins (PotB and PotC) and a solute-binding protein (PotD).

The protein resides in the cell inner membrane. It carries out the reaction ATP + H2O + polyamine-[polyamine-binding protein]Side 1 = ADP + phosphate + polyamineSide 2 + [polyamine-binding protein]Side 1.. Part of the ABC transporter complex PotABCD involved in spermidine/putrescine import. Responsible for energy coupling to the transport system. The sequence is that of Spermidine/putrescine import ATP-binding protein PotA from Shigella flexneri.